The sequence spans 255 residues: Phosphoribosyl isomerase A (255 aa).

Catalysis depends on D21, which acts as the Proton acceptor. Residue D140 is the Proton donor of the active site.

It belongs to the HisA/HisF family.

The protein resides in the cytoplasm. The catalysed reaction is 1-(5-phospho-beta-D-ribosyl)-5-[(5-phospho-beta-D-ribosylamino)methylideneamino]imidazole-4-carboxamide = 5-[(5-phospho-1-deoxy-D-ribulos-1-ylimino)methylamino]-1-(5-phospho-beta-D-ribosyl)imidazole-4-carboxamide. It catalyses the reaction N-(5-phospho-beta-D-ribosyl)anthranilate = 1-(2-carboxyphenylamino)-1-deoxy-D-ribulose 5-phosphate. It functions in the pathway amino-acid biosynthesis; L-histidine biosynthesis; L-histidine from 5-phospho-alpha-D-ribose 1-diphosphate: step 4/9. The protein operates within amino-acid biosynthesis; L-tryptophan biosynthesis; L-tryptophan from chorismate: step 3/5. Involved in both the histidine and tryptophan biosynthetic pathways. The protein is Phosphoribosyl isomerase A of Mycolicibacterium vanbaalenii (strain DSM 7251 / JCM 13017 / BCRC 16820 / KCTC 9966 / NRRL B-24157 / PYR-1) (Mycobacterium vanbaalenii).